The chain runs to 430 residues: Zinc finger and SCAN domain-containing protein 4 (430 aa).

Residues 1–38 (MASDLRISFQGEPSRNDPGSENLEHKPSQGPAVQEEEE) form a disordered region. An SCAN box domain is found at 44 to 126 (RTQLSLLQNS…KFMEDLTDES (83 aa)). The segment covering 164–185 (GSPTGTDMETPSWTPQDTSLET) has biased composition (polar residues). Disordered regions lie at residues 164–196 (GSPTGTDMETPSWTPQDTSLETGQGEWGDKENG), 224–257 (YPRPEEDSVSLKNPLSSRKAGLGMSGSQEGSLKG), and 281–300 (EPVPTHQRTEGNSTRGGHQE). C2H2-type zinc fingers lie at residues 309–331 (YRCEKCPKIFRYFSQLKAHQRRH), 337–359 (FTCAECNRGFFQASDLHVHQKIH), 365–387 (FTCSTCEKSFSHKTNLLAHERIH), and 393–415 (YECSLCHRSYRQSSTYHRHLRNH).

The protein resides in the nucleus. Its subcellular location is the chromosome. It localises to the telomere. Its function is as follows. Embryonic stem (ES) cell-specific transcription factor required to regulate ES cell pluripotency. Binds telomeres and plays a key role in genomic stability in ES cells by regulating telomere elongation. Acts as an activator of spontaneous telomere sister chromatid exchange (T-SCE) and telomere elongation in undifferentiated ES cells. The protein is Zinc finger and SCAN domain-containing protein 4 (ZSCAN4) of Ailuropoda melanoleuca (Giant panda).